We begin with the raw amino-acid sequence, 608 residues long: MDKVQHVILVLSGKGGVGKSSVTTQLALSLHDSKVYSRPLKTGILDIDLTGPSIPRMFGKDAERNRIHQSSAGWVPVYTDETKEIGLMSLGFLLTSKNDSVVWRGPKKAAMIRQFISDVSWGELDFLIIDTPPGTGDEHLTIVESLLSETSTVRDVPIDGAVIVTTPQGIATLDVQKEIDFCKKASIKILGIVENMSGYICPHCADCTNIFSSGGGLTLSEKYKLPFLGSVPIDPKFGEMIENLTPDSNIVHLYSKTEMSKKFSFITNEFLNQLYGPRKLDTITTISGHTGRLWSVAAHPMLPLFATSSQDKSVRIYNSNTYNLVHVIDGFHTRSIRRVAWRPIERPVLAVASFDSVVSINEKIDDDWECTAALEGHENEVKCIAWSCNGNYLATCSRDKSVWIWEATEDDEFDCLAVLQEHTQDVKVVTWHPTEDLLVSGSYDNSICFWRDDGDDWALTCQLQGHTNTVWALAFSPNGNTLASADNDGNVFLWIKISSNEDVATIDSTNILRPALQEEWKQQTSLPHIHKGAVYTISWMNDATLCSAGGDGKIVVYQREKHDEALWHVAYEQDHAHGVYEINSLEYLRDDRLLSGGDDGECRVWSFK.

13 to 20 is a binding site for ATP; the sequence is GKGGVGKS. [4Fe-4S] cluster is bound by residues cysteine 201 and cysteine 204. WD repeat units lie at residues 288-327, 331-371, 376-415, 421-460, 465-504, 529-567, and 576-608; these read GHTGRLWSVAAHPMLPLFATSSQDKSVRIYNSNTYNLVHV, FHTR…WECT, GHENEVKCIAWSCNGNYLATCSRDKSVWIWEATEDDEFDC, EHTQDVKVVTWHPTEDLLVSGSYDNSICFWRDDGDDWALT, GHTNTVWALAFSPNGNTLASADNDGNVFLWIKISSNEDVA, IHKGAVYTISWMNDATLCSAGGDGKIVVYQREKHDEALW, and AHGVYEINSLEYLRDDRLLSGGDDGECRVWSFK.

This sequence in the N-terminal section; belongs to the Mrp/NBP35 ATP-binding proteins family. NUBP2/CFD1 subfamily. In the C-terminal section; belongs to the WD repeat CIA1 family. As to quaternary structure, heterotetramer of 2 nbp35 and 2 SPAC806.02c chains. The cofactor is [4Fe-4S] cluster.

The protein resides in the cytoplasm. It localises to the nucleus. Functionally, fusion protein of two essential components of the cytosolic iron-sulfur (Fe/S) protein assembly (CIA) machinery. Required for maturation of extramitochondrial Fe-S proteins. May form a heterotetramer with nubp35, functioning as a Fe-S scaffold complex, mediating the de novo assembly of an Fe-S cluster and its transfer to target apoproteins. The protein is Probable cytosolic Fe-S cluster assembly factor SPAC806.02c of Schizosaccharomyces pombe (strain 972 / ATCC 24843) (Fission yeast).